We begin with the raw amino-acid sequence, 215 residues long: Thymidylate kinase (215 aa).

Gly-12–Ser-19 lines the ATP pocket.

It belongs to the thymidylate kinase family.

The enzyme catalyses dTMP + ATP = dTDP + ADP. Functionally, phosphorylation of dTMP to form dTDP in both de novo and salvage pathways of dTTP synthesis. This Albidiferax ferrireducens (strain ATCC BAA-621 / DSM 15236 / T118) (Rhodoferax ferrireducens) protein is Thymidylate kinase.